Reading from the N-terminus, the 866-residue chain is MNKDVSQHTPMMQQYLQLKAQHPDILLFYRMGDFYELFYEDAKKAAVLLDISLTKRGASAGEPIPMAGVPYHAVEGYLAKLVALGESVAICEQIGEVGASKGPVERKVVRIVTPGTVSDEALLPERQDNLVAAICEQKGVFAIATLDMTSGRFLISELANKTALMAELQRVMPAEILYPEDFAYIPMLNNYKGLRRRPCWEFELVTAIQLLNRQFGTQCLDGFGVQQAKVALCAAGCVLHYAQETQRTALPHINSIHLSQDSEMVLLDAATRRNLELTQNLAGGTEATLASVLDKCVTPMGSRLLKRWIHQPIRQLDILKSRQDMIATLQQYEQIEPLQPLLRNVGDMERILARIALRSARPRDLTRLRTALAQLPLIAKCTQNLGACLAVLLSKNADFSELYTLLEQAIIETPPQLIRDGGVIAEGYHAELDEWRTLSAGATQYLDNLEIRERESTGIDTLKIGFNAVQGYYIQISQAQAHKAPIHYVRRQTLKNAERYIIPELKTYEDKVLKAKGAALALEKQLYEQLFDLIMPHLGALQQTAMALSELDVLVNLAERAESLHYVRPSFSLQRGINIKAGRHPVVEHVMVEPFIANTVFLNSQRHLLIVTGPNMGGKSTYMRQTALICLMAYIGSFVPAESAEIGVIDRIFTRIGASDDLASGRSTFMVEMTEMANILHQATAQSVVLIDEIGRGTSTYDGLALACACAEWLANKTQSLTLFATHYFELTSLPSQLKGVANVHLDACEYNDTIAFMHSVQEGAASKSYGLAVAALAGVPKQVIALAKQRLVHLEEFSQQTKMAQQHPQADLLFTVEMPEEEKMAPLAKAESAVELALRAITPDELTPRQALDELYRLKKLLSSS.

613–620 lines the ATP pocket; the sequence is GPNMGGKS.

Belongs to the DNA mismatch repair MutS family.

In terms of biological role, this protein is involved in the repair of mismatches in DNA. It is possible that it carries out the mismatch recognition step. This protein has a weak ATPase activity. This Haemophilus ducreyi (strain 35000HP / ATCC 700724) protein is DNA mismatch repair protein MutS.